The following is a 1070-amino-acid chain: Carbamoyl phosphate synthase large chain (1070 aa).

Residues 1–401 form a carboxyphosphate synthetic domain region; it reads MPKRDDIKTI…ALLKAVRSLE (401 aa). ATP contacts are provided by Arg-129, Arg-169, Gly-175, Gly-176, Lys-208, Ile-210, Glu-215, Gly-241, Ile-242, His-243, Gln-284, and Glu-298. Residues 133-327 enclose the ATP-grasp 1 domain; sequence RDLMNELGEP…IAKLAAKIAV (195 aa). Gln-284, Glu-298, and Asn-300 together coordinate Mg(2+). The Mn(2+) site is built by Gln-284, Glu-298, and Asn-300. The interval 402–546 is oligomerization domain; sequence IGADHLLLEE…YSTYEDENES (145 aa). A carbamoyl phosphate synthetic domain region spans residues 547-929; the sequence is IRSSKESVIV…ALYKGFVASG (383 aa). Residues 671–861 form the ATP-grasp 2 domain; that stretch reads EKALEILQIP…MANVATRVIL (191 aa). The ATP site is built by Arg-707, Arg-746, Val-748, Glu-752, Gly-777, Val-778, His-779, Ser-780, Gln-820, and Glu-832. Residues Gln-820, Glu-832, and Asn-834 each contribute to the Mg(2+) site. Mn(2+)-binding residues include Gln-820, Glu-832, and Asn-834. The MGS-like domain maps to 930-1070; the sequence is TTMHDYGTVL…SEVKQPKARV (141 aa). Residues 930-1070 are allosteric domain; the sequence is TTMHDYGTVL…SEVKQPKARV (141 aa).

The protein belongs to the CarB family. In terms of assembly, composed of two chains; the small (or glutamine) chain promotes the hydrolysis of glutamine to ammonia, which is used by the large (or ammonia) chain to synthesize carbamoyl phosphate. Tetramer of heterodimers (alpha,beta)4. The cofactor is Mg(2+). Mn(2+) is required as a cofactor.

The enzyme catalyses hydrogencarbonate + L-glutamine + 2 ATP + H2O = carbamoyl phosphate + L-glutamate + 2 ADP + phosphate + 2 H(+). The catalysed reaction is hydrogencarbonate + NH4(+) + 2 ATP = carbamoyl phosphate + 2 ADP + phosphate + 2 H(+). It participates in amino-acid biosynthesis; L-arginine biosynthesis; carbamoyl phosphate from bicarbonate: step 1/1. Its pathway is pyrimidine metabolism; UMP biosynthesis via de novo pathway; (S)-dihydroorotate from bicarbonate: step 1/3. Large subunit of the glutamine-dependent carbamoyl phosphate synthetase (CPSase). CPSase catalyzes the formation of carbamoyl phosphate from the ammonia moiety of glutamine, carbonate, and phosphate donated by ATP, constituting the first step of 2 biosynthetic pathways, one leading to arginine and/or urea and the other to pyrimidine nucleotides. The large subunit (synthetase) binds the substrates ammonia (free or transferred from glutamine from the small subunit), hydrogencarbonate and ATP and carries out an ATP-coupled ligase reaction, activating hydrogencarbonate by forming carboxy phosphate which reacts with ammonia to form carbamoyl phosphate. In Listeria innocua serovar 6a (strain ATCC BAA-680 / CLIP 11262), this protein is Carbamoyl phosphate synthase large chain.